A 211-amino-acid polypeptide reads, in one-letter code: Large ribosomal subunit protein bL25 (211 aa).

Positions Met-1–Gly-18 are enriched in basic and acidic residues. Residues Met-1–Ser-20 form a disordered region.

It belongs to the bacterial ribosomal protein bL25 family. CTC subfamily. Part of the 50S ribosomal subunit; part of the 5S rRNA/L5/L18/L25 subcomplex. Contacts the 5S rRNA. Binds to the 5S rRNA independently of L5 and L18.

Functionally, this is one of the proteins that binds to the 5S RNA in the ribosome where it forms part of the central protuberance. This chain is Large ribosomal subunit protein bL25, found in Xanthomonas oryzae pv. oryzae (strain MAFF 311018).